Here is a 271-residue protein sequence, read N- to C-terminus: Protein-L-isoaspartate O-methyltransferase (271 aa).

Residues 1-15 (MRKPVTPPGNPPRPR) show a composition bias toward pro residues. The disordered stretch occupies residues 1–60 (MRKPVTPPGNPPRPRSPGYGSTSLAPGITAANSNTRISPPTLARPAPAAGAGGQGGNLGL). Residues 39–49 (PPTLARPAPAA) are compositionally biased toward low complexity. Ser119 is an active-site residue.

This sequence belongs to the methyltransferase superfamily. L-isoaspartyl/D-aspartyl protein methyltransferase family.

The protein localises to the cytoplasm. The enzyme catalyses [protein]-L-isoaspartate + S-adenosyl-L-methionine = [protein]-L-isoaspartate alpha-methyl ester + S-adenosyl-L-homocysteine. Functionally, catalyzes the methyl esterification of L-isoaspartyl residues in peptides and proteins that result from spontaneous decomposition of normal L-aspartyl and L-asparaginyl residues. It plays a role in the repair and/or degradation of damaged proteins. The chain is Protein-L-isoaspartate O-methyltransferase from Bordetella petrii (strain ATCC BAA-461 / DSM 12804 / CCUG 43448).